The following is a 90-amino-acid chain: Cell division protein CrgA (90 aa).

The segment at 1–26 (MPKAKVTKNSIAPVSSNPSANRTPVK) is disordered. Polar residues predominate over residues 7-26 (TKNSIAPVSSNPSANRTPVK). 2 helical membrane-spanning segments follow: residues 38-58 (VIMF…YLVG) and 69-89 (AWNY…TMGW).

The protein belongs to the CrgA family.

It localises to the cell membrane. Involved in cell division. The protein is Cell division protein CrgA of Corynebacterium efficiens (strain DSM 44549 / YS-314 / AJ 12310 / JCM 11189 / NBRC 100395).